We begin with the raw amino-acid sequence, 468 residues long: Chromatin assembly factor 1 subunit B (468 aa).

WD repeat units lie at residues 11-52, 69-108, 143-182, 185-224, and 371-413; these read HDSQ…NGQN, HHEQ…TQQE, TAAA…LVCG, DHGH…AGVV, and IHYS…SRIE.

This sequence belongs to the WD repeat HIR1 family. As to quaternary structure, component of chromatin assembly factor 1 (CAF-1), composed of MSI1/p50, CAC2/p60 and CAC1/p90. Interacts with RTT106.

The protein localises to the nucleus. Its function is as follows. Acts as a component of the histone chaperone complex chromatin assembly factor 1 (CAF-1), which assembles histone octamers onto replicating DNA. It performs the first step of the nucleosome assembly process, bringing newly synthesized histones H3 and H4 to replicating DNA; histones H2A/H2B can bind to this chromatin precursor subsequent to DNA replication to complete the histone octamer. Plays a role in the maintenance of heterochromatin. The chain is Chromatin assembly factor 1 subunit B (CAC2) from Saccharomyces cerevisiae (strain ATCC 204508 / S288c) (Baker's yeast).